The primary structure comprises 341 residues: S-adenosylmethionine:tRNA ribosyltransferase-isomerase (341 aa).

The protein belongs to the QueA family. In terms of assembly, monomer.

The protein localises to the cytoplasm. It carries out the reaction 7-aminomethyl-7-carbaguanosine(34) in tRNA + S-adenosyl-L-methionine = epoxyqueuosine(34) in tRNA + adenine + L-methionine + 2 H(+). It participates in tRNA modification; tRNA-queuosine biosynthesis. In terms of biological role, transfers and isomerizes the ribose moiety from AdoMet to the 7-aminomethyl group of 7-deazaguanine (preQ1-tRNA) to give epoxyqueuosine (oQ-tRNA). This Clostridioides difficile (strain 630) (Peptoclostridium difficile) protein is S-adenosylmethionine:tRNA ribosyltransferase-isomerase.